An 810-amino-acid chain; its full sequence is Hemoglobin-haptoglobin utilization protein B (810 aa).

Positions 1–22 (MPIPFKPVLAVAAIAQAFPAFA) are cleaved as a signal peptide. Residues 34–166 (NEITVTGTHK…LGGAVNYQTK (133 aa)) enclose the TBDR plug domain. In terms of domain architecture, TBDR beta-barrel spans 175–810 (DKPYHLGIKG…SYNFTIEAKF (636 aa)). The short motif at 793–810 (QRFTSPGRSYNFTIEAKF) is the TonB C-terminal box element.

Belongs to the TonB-dependent receptor family.

It localises to the cell outer membrane. In terms of biological role, acts as a receptor for hemoglobin or the hemoglobin/haptoglobin complex and is required for heme uptake. The protein is Hemoglobin-haptoglobin utilization protein B (hpuB) of Neisseria meningitidis serogroup C.